A 215-amino-acid chain; its full sequence is Ectodysplasin-A receptor-associated adapter protein (215 aa).

Disordered regions lie at residues 1–41 and 62–86; these read MGLR…FNMS and LNCP…TGDP. Over residues 17-28 the composition is skewed to basic and acidic residues; it reads GHQEDHMVKEPV. The Death domain occupies 123–202; that stretch reads DVIRIKLDPC…KVLRRWVDEE (80 aa).

In terms of assembly, self-associates and binds EDAR, TRAF1, TRAF2 and TRAF3. In terms of tissue distribution, detected in adult pancreas, placenta and fetal skin, and at lower levels in lung, thymus, prostate and testis.

It is found in the cytoplasm. Adapter protein that interacts with EDAR DEATH domain and couples the receptor to EDA signaling pathway during morphogenesis of ectodermal organs. Mediates the activation of NF-kappa-B. This chain is Ectodysplasin-A receptor-associated adapter protein (EDARADD), found in Homo sapiens (Human).